The primary structure comprises 439 residues: Dolichyl-diphosphooligosaccharide--protein glycosyltransferase 48 kDa subunit (439 aa).

Residues 1–26 (MEPSTAARAWALFWLLPPLLGAVCAS) form the signal peptide. At 27–410 (GPRTLVLLDN…YERFIPSAYP (384 aa)) the chain is on the lumenal side. A helical transmembrane segment spans residues 411–430 (YYASAFSMMLGLFIFSIVFL). The Cytoplasmic segment spans residues 431-439 (HMKEKEKSD).

The protein belongs to the DDOST 48 kDa subunit family. In terms of assembly, component of the oligosaccharyltransferase (OST) complex. OST exists in two different complex forms which contain common core subunits RPN1, RPN2, OST48, OST4, DAD1 and TMEM258, either STT3A or STT3B as catalytic subunits, and form-specific accessory subunits. STT3A complex assembly occurs through the formation of 3 subcomplexes. Subcomplex 1 contains RPN1 and TMEM258, subcomplex 2 contains the STT3A-specific subunits STT3A, DC2/OSTC, and KCP2 as well as the core subunit OST4, and subcomplex 3 contains RPN2, DAD1, and OST48. The STT3A complex can form stable complexes with the Sec61 complex or with both the Sec61 and TRAP complexes. Interacts with SMIM22.

The protein resides in the endoplasmic reticulum membrane. The protein operates within protein modification; protein glycosylation. Functionally, subunit of the oligosaccharyl transferase (OST) complex that catalyzes the initial transfer of a defined glycan (Glc(3)Man(9)GlcNAc(2) in eukaryotes) from the lipid carrier dolichol-pyrophosphate to an asparagine residue within an Asn-X-Ser/Thr consensus motif in nascent polypeptide chains, the first step in protein N-glycosylation. N-glycosylation occurs cotranslationally and the complex associates with the Sec61 complex at the channel-forming translocon complex that mediates protein translocation across the endoplasmic reticulum (ER). All subunits are required for a maximal enzyme activity. Required for the assembly of both SST3A- and SS3B-containing OST complexes. The chain is Dolichyl-diphosphooligosaccharide--protein glycosyltransferase 48 kDa subunit from Pongo abelii (Sumatran orangutan).